We begin with the raw amino-acid sequence, 98 residues long: NADH-ubiquinone oxidoreductase chain 4L (98 aa).

A run of 3 helical transmembrane segments spans residues 1-21 (MTSISLNLIMAFSLALAGVLI), 28-48 (STLLCLEGMMLSLFILMALLI), and 59-79 (APLILLVFSACEAGVGLALLV).

This sequence belongs to the complex I subunit 4L family. As to quaternary structure, core subunit of respiratory chain NADH dehydrogenase (Complex I) which is composed of 45 different subunits.

It is found in the mitochondrion inner membrane. The catalysed reaction is a ubiquinone + NADH + 5 H(+)(in) = a ubiquinol + NAD(+) + 4 H(+)(out). Functionally, core subunit of the mitochondrial membrane respiratory chain NADH dehydrogenase (Complex I) which catalyzes electron transfer from NADH through the respiratory chain, using ubiquinone as an electron acceptor. Part of the enzyme membrane arm which is embedded in the lipid bilayer and involved in proton translocation. The polypeptide is NADH-ubiquinone oxidoreductase chain 4L (MT-ND4L) (Vombatus ursinus (Common wombat)).